The following is a 165-amino-acid chain: NADH-quinone oxidoreductase subunit I (165 aa).

2 consecutive 4Fe-4S ferredoxin-type domains span residues 57–86 and 96–125; these read RRYE…IESD and SRYD…ETHI. Positions 66, 69, 72, 76, 105, 108, 111, and 115 each coordinate [4Fe-4S] cluster.

Belongs to the complex I 23 kDa subunit family. NDH-1 is composed of 14 different subunits. Subunits NuoA, H, J, K, L, M, N constitute the membrane sector of the complex. [4Fe-4S] cluster is required as a cofactor.

The protein resides in the cell inner membrane. The catalysed reaction is a quinone + NADH + 5 H(+)(in) = a quinol + NAD(+) + 4 H(+)(out). Its function is as follows. NDH-1 shuttles electrons from NADH, via FMN and iron-sulfur (Fe-S) centers, to quinones in the respiratory chain. The immediate electron acceptor for the enzyme in this species is believed to be ubiquinone. Couples the redox reaction to proton translocation (for every two electrons transferred, four hydrogen ions are translocated across the cytoplasmic membrane), and thus conserves the redox energy in a proton gradient. The chain is NADH-quinone oxidoreductase subunit I from Polaromonas naphthalenivorans (strain CJ2).